A 281-amino-acid polypeptide reads, in one-letter code: Short neuropeptide F (281 aa).

The signal sequence occupies residues 1–30 (MFHLKRELSQGCALALICLVSLQMQQPAQA). Residues 31–64 (EVSSAQGTPLSNLYDNLLQREYAGPVVFPNHQVE) constitute a propeptide that is removed on maturation. A phenylalanine amide mark is found at phenylalanine 77 and phenylalanine 111. A propeptide spanning residues 115-165 (DPSLPQMRRTAYDDLLERELTLNSQQQQQQLGTEPDSDLGADYDGLYERVV) is cleaved from the precursor. The segment at 137–156 (NSQQQQQQLGTEPDSDLGAD) is disordered. Position 173 is a tryptophan amide (tryptophan 173). Positions 176–246 (SVPQFEANNA…NDTSEFQREV (71 aa)) are excised as a propeptide. The segment at 226 to 281 (ANDEDTDTDLNNDTSEFQREVRKPMRLRWGRSTGKAPSEQKHTPEETSSIPPKTQN) is disordered. Tryptophan 254 is subject to Tryptophan amide. Positions 257 to 281 (STGKAPSEQKHTPEETSSIPPKTQN) are excised as a propeptide. Residues 271-281 (ETSSIPPKTQN) show a composition bias toward polar residues.

The protein belongs to the NPY family. As to expression, stage 17 embryos show expression in the two brain hemispheres (neural cells located in the dorsal posterior region), the connected ventral ganglion (pairs of neural cells along the ventral midline) and the peripheral nervous system (expressed in the antennal-maxillary sensory cells). In the brain hemispheres of the feeding third instar larva, expression in neural cells is located in the dorsal-anterior region of the protocerebrum. In the larval ventral ganglion, expression is seen in the neural cells located in the subesophagial region, along the ventral midline and in thoracic and abdominal segments. In the adult brain, expression is seen in the medulla and the mushroom body calyx (at protein level).

The protein localises to the secreted. Plays a role in controlling food intake and regulating body size. The protein is Short neuropeptide F (sNPF) of Drosophila melanogaster (Fruit fly).